The sequence spans 622 residues: Coiled-coil domain-containing protein 17 (622 aa).

Coiled coils occupy residues 81 to 102 (RSALKRLTEEVQWLRLSLQEMR), 146 to 207 (ARRV…LEVL), and 294 to 320 (GELPVVEAENRRLEAEILALQMQRGRA). 2 disordered regions span residues 334 to 356 (SLQPKGRRDPPLLPPPVAPPLPP) and 584 to 622 (PAVGFADPPPRTEEPLSGVKDRDEGLGPHHSSDLPPVSF). Pro residues predominate over residues 344-356 (PLLPPPVAPPLPP). A compositionally biased stretch (basic and acidic residues) spans 593 to 615 (PRTEEPLSGVKDRDEGLGPHHSS).

This is Coiled-coil domain-containing protein 17 (CCDC17) from Homo sapiens (Human).